Consider the following 337-residue polypeptide: MRGFLMFTSGPFDIDFVVLWVDGSDEKWLQKRAIYSSTKQQNNAVRFRDYGIFKYWFRAVAKYAPWVHHVYLVTDEQIPNWLSIQNSKVSVIDHKSIMPEDALPTFNSSAIELNIANIPGLSEHFVYFNDDMFLNRQVTPMDFFSEDGLPKDSAVQNAIMPVEDFDHMTANNVMLINQNFNKYQVLRRHPFRFFNFRYGFLNVLSICLLPWPRFTRFQDPHVPISFRKSVFEKVLNLHRDAWNETSHNRFRNRNDNTIWLIRYYQLVTAQFNPRTPFVGKKYNIGEMKKIVNDINTGKHKMICINDQNVSMAEFDNLTKQLRSTFRSKLPQKSEFEK.

The protein belongs to the stealth family.

This is Exopolysaccharide phosphotransferase cps2G (cps2G) from Lactiplantibacillus plantarum (strain ATCC BAA-793 / NCIMB 8826 / WCFS1) (Lactobacillus plantarum).